The sequence spans 407 residues: Multifunctional CCA protein (407 aa).

Residues G8 and R11 each coordinate ATP. CTP-binding residues include G8 and R11. Mg(2+)-binding residues include D21 and D23. ATP contacts are provided by R91, R137, and R140. R91, R137, and R140 together coordinate CTP. In terms of domain architecture, HD spans 228–329; the sequence is TGIHTLLVAE…VKIFNKLDVW (102 aa).

It belongs to the tRNA nucleotidyltransferase/poly(A) polymerase family. Bacterial CCA-adding enzyme type 1 subfamily. In terms of assembly, monomer. Can also form homodimers and oligomers. Requires Mg(2+) as cofactor. The cofactor is Ni(2+).

The catalysed reaction is a tRNA precursor + 2 CTP + ATP = a tRNA with a 3' CCA end + 3 diphosphate. It carries out the reaction a tRNA with a 3' CCA end + 2 CTP + ATP = a tRNA with a 3' CCACCA end + 3 diphosphate. Catalyzes the addition and repair of the essential 3'-terminal CCA sequence in tRNAs without using a nucleic acid template. Adds these three nucleotides in the order of C, C, and A to the tRNA nucleotide-73, using CTP and ATP as substrates and producing inorganic pyrophosphate. tRNA 3'-terminal CCA addition is required both for tRNA processing and repair. Also involved in tRNA surveillance by mediating tandem CCA addition to generate a CCACCA at the 3' terminus of unstable tRNAs. While stable tRNAs receive only 3'-terminal CCA, unstable tRNAs are marked with CCACCA and rapidly degraded. The sequence is that of Multifunctional CCA protein from Vibrio vulnificus (strain YJ016).